The primary structure comprises 550 residues: MLRTACSRSHVFKAFSSSLMLEHALAAANSSGAAAPTNAASTGNSHDSTLKSELPLRTLNDELHNAERKYIKPLTNAPEWSSTRTGPNSKIREYLKNGQYTKLLIRLSVDNHLNNEYISGLFTTGGLTKSEYSLFINKLLSEEELDVKLSNVIPDTPHTELIYKLYEFYCDHIVDQHNLTPLQLYDLNLFLKTFIAEAQLSKAHNVLDFILLRRPLNDLLANTDVEILIQFLRLKCGALSKFWKIQPASQRNSTAITLGEKASDCHLAKSYKFQNEKVLLQIINSVLGEHNWKNRRSPKLDAAIIYSLGYLGQTDLIEKYVNRTWSPSKDEGVKTNPNSDLLVAVLTSYCVKEGNMRKGLEVLDRFIRDYPEVELDPLFWRRLLQLSSLLWDKKRDRKATLSHGCWTIMKQWHAQRQRKIPYDYGIMKELYPIFVRTKNKNGALEVITKSFFGAFIQPEFTIRPNELSLLCKYQRFILKMIALKGNYHKGFEFCQEWSFSSTNKFELQSYFMKWRGIHEQRRTSQSKQKAALQEKYDEMEEDDMLLGRLW.

This sequence belongs to the AEP2 family. As to quaternary structure, binds to the 5'UTR of the OLI1 mRNA.

It is found in the mitochondrion. Its function is as follows. Required for translation of the mitochondrial OLI1 transcript coding for the mitochondrial ATP synthase subunit 9. This Zygosaccharomyces rouxii (strain ATCC 2623 / CBS 732 / NBRC 1130 / NCYC 568 / NRRL Y-229) protein is ATPase expression protein 2, mitochondrial (AEP2).